Reading from the N-terminus, the 341-residue chain is MIELKEVVKEYRTKNKEVLAVDHVNLSIRAGSIYGVIGFSGAGKSTLIRMFNHLEAPTSGEVIIDGDHIGQLSKNGLRAKRQKVSMIFQHFNLLWSRTVLKNIMFPLEIAGVPRRRAKQKALELVELVGLKGREKAYPSELSGGQKQRVGIARALANDPTVLLCDEATSALDPQTTDEILDLLLKIREQQNLTIVLITHEMHVIRRICDEVAVMESGKVIEQGPVTQVFENPQHTVTKRFVKDDLNDDFETSLTELEPLEKDAYIVRLVFAGSTTTEPIVSSLSTAYDIKINILEANIKNTKNGTVGFLVLHIPYISSVDFGKFEKELIERQVKMEVLRHG.

The ABC transporter domain maps to 2 to 241 (IELKEVVKEY…PQHTVTKRFV (240 aa)). 38–45 (GFSGAGKS) contacts ATP.

Belongs to the ABC transporter superfamily. Methionine importer (TC 3.A.1.24) family. As to quaternary structure, the complex is composed of two ATP-binding proteins (MetN), two transmembrane proteins (MetI) and a solute-binding protein (MetQ).

Its subcellular location is the cell membrane. It catalyses the reaction L-methionine(out) + ATP + H2O = L-methionine(in) + ADP + phosphate + H(+). The enzyme catalyses D-methionine(out) + ATP + H2O = D-methionine(in) + ADP + phosphate + H(+). Functionally, part of the ABC transporter complex MetNIQ involved in methionine import. Responsible for energy coupling to the transport system. In Staphylococcus aureus (strain USA300), this protein is Methionine import ATP-binding protein MetN 2.